The sequence spans 186 residues: Peptidyl-tRNA hydrolase (186 aa).

A tRNA-binding site is contributed by Tyr-14. His-19 serves as the catalytic Proton acceptor. TRNA is bound by residues Tyr-64, Asn-66, and Asn-112.

This sequence belongs to the PTH family. In terms of assembly, monomer.

The protein localises to the cytoplasm. The enzyme catalyses an N-acyl-L-alpha-aminoacyl-tRNA + H2O = an N-acyl-L-amino acid + a tRNA + H(+). In terms of biological role, hydrolyzes ribosome-free peptidyl-tRNAs (with 1 or more amino acids incorporated), which drop off the ribosome during protein synthesis, or as a result of ribosome stalling. Functionally, catalyzes the release of premature peptidyl moieties from peptidyl-tRNA molecules trapped in stalled 50S ribosomal subunits, and thus maintains levels of free tRNAs and 50S ribosomes. This chain is Peptidyl-tRNA hydrolase, found in Bacillus anthracis.